Reading from the N-terminus, the 38-residue chain is Large ribosomal subunit protein bL36 (38 aa).

The protein belongs to the bacterial ribosomal protein bL36 family.

This is Large ribosomal subunit protein bL36 from Proteus mirabilis (strain HI4320).